Consider the following 335-residue polypeptide: Urokinase plasminogen activator surface receptor (335 aa).

Residues 1–22 form the signal peptide; sequence MGHPPLLPLLLLLHTCVPASWG. UPAR/Ly6 domains are found at residues 23 to 114, 115 to 213, and 214 to 305; these read LRCM…RSRY, LECI…PQNG, and RQCY…YRSG. 3 disulfide bridges follow: cysteine 25–cysteine 46, cysteine 28–cysteine 34, and cysteine 39–cysteine 67. Residue asparagine 74 is glycosylated (N-linked (GlcNAc...) asparagine). 11 disulfide bridges follow: cysteine 93–cysteine 98, cysteine 117–cysteine 144, cysteine 120–cysteine 127, cysteine 137–cysteine 169, cysteine 175–cysteine 192, cysteine 193–cysteine 198, cysteine 216–cysteine 244, cysteine 219–cysteine 227, cysteine 237–cysteine 263, cysteine 269–cysteine 287, and cysteine 288–cysteine 293. Asparagine 124 is a glycosylation site (N-linked (GlcNAc...) asparagine). Asparagine 184, asparagine 194, asparagine 222, and asparagine 255 each carry an N-linked (GlcNAc...) asparagine glycan. Glycine 305 carries GPI-anchor amidated glycine lipidation. Positions 306-335 are cleaved as a propeptide — removed in mature form; it reads AAPQPGPAHLSLTITLLMTARLWGGTLLWT.

As to quaternary structure, monomer. Interacts (via the UPAR/Ly6 domains) with SRPX2. Interacts with MRC2. Interacts with FAP (seprase); the interaction occurs at the cell surface of invadopodia membrane. Interacts with SORL1 (via N-terminal ectodomain); this interaction decreases PLAUR internalization. The ternary complex composed of PLAUR-PLAU-SERPINE1 also interacts with SORL1. Interacts with CD82; this interaction prevents PLAUR from binding to its high affinity ligand PLAU.

It is found in the cell membrane. It localises to the cell projection. Its subcellular location is the invadopodium membrane. Its function is as follows. Acts as a receptor for urokinase plasminogen activator. Plays a role in localizing and promoting plasmin formation. Mediates the proteolysis-independent signal transduction activation effects of U-PA. It is subject to negative-feedback regulation by U-PA which cleaves it into an inactive form. This Pan troglodytes (Chimpanzee) protein is Urokinase plasminogen activator surface receptor (PLAUR).